Consider the following 349-residue polypeptide: Homeobox protein engrailed (349 aa).

Disordered regions lie at residues 26 to 53 (DGPS…SPLS), 146 to 210 (GKET…PLPP), 228 to 252 (PSSG…EKRP), and 327 to 349 (STIP…ARIE). Composition is skewed to basic and acidic residues over residues 173–188 (QMKK…RTES) and 242–252 (DKAITPDEKRP). Positions 249 to 308 (EKRPRTAFTAEQLSRLKHEFNENRYLTERRRQDLARELGLHENQIKIWFQNNRAKLKKSS) form a DNA-binding region, homeobox.

It belongs to the engrailed homeobox family.

Its subcellular location is the nucleus. The chain is Homeobox protein engrailed from Artemia franciscana (Brine shrimp).